A 215-amino-acid polypeptide reads, in one-letter code: Large ribosomal subunit protein uL3 (215 aa).

Gln151 bears the N5-methylglutamine mark.

It belongs to the universal ribosomal protein uL3 family. As to quaternary structure, part of the 50S ribosomal subunit. Forms a cluster with proteins L14 and L19. Methylated by PrmB.

In terms of biological role, one of the primary rRNA binding proteins, it binds directly near the 3'-end of the 23S rRNA, where it nucleates assembly of the 50S subunit. The polypeptide is Large ribosomal subunit protein uL3 (Rickettsia bellii (strain OSU 85-389)).